The following is an 89-amino-acid chain: Small ribosomal subunit protein uS15 (89 aa).

It belongs to the universal ribosomal protein uS15 family. Part of the 30S ribosomal subunit. Forms a bridge to the 50S subunit in the 70S ribosome, contacting the 23S rRNA.

One of the primary rRNA binding proteins, it binds directly to 16S rRNA where it helps nucleate assembly of the platform of the 30S subunit by binding and bridging several RNA helices of the 16S rRNA. In terms of biological role, forms an intersubunit bridge (bridge B4) with the 23S rRNA of the 50S subunit in the ribosome. This chain is Small ribosomal subunit protein uS15, found in Chelativorans sp. (strain BNC1).